Here is a 506-residue protein sequence, read N- to C-terminus: DNA polymerase type-X family protein pol4 (506 aa).

The region spanning 1-98 is the BRCT domain; the sequence is MKILASSTNY…TPGNPYVIWH (98 aa). Residues 106–150 form a disordered region; the sequence is GSPYTPSTRPASHTEAPNDFENHETPNTENNNEVKSIDNVDQEGS. Residues 348-357 form an involved in ssDNA binding region; the sequence is RGKPVGADVD. Residues aspartate 355, aspartate 357, and aspartate 419 each contribute to the Mg(2+) site.

Belongs to the DNA polymerase type-X family. The cofactor is Mg(2+).

Its subcellular location is the cytoplasm. It is found in the nucleus. It carries out the reaction DNA(n) + a 2'-deoxyribonucleoside 5'-triphosphate = DNA(n+1) + diphosphate. Functionally, repair polymerase. Involved in gap-filling in DNA non-homologous end joining (NHEJ) required for double-strand break repair. Can incorporate a ribonucleotide (rNTP) into a primer DNA. In Schizosaccharomyces pombe (strain 972 / ATCC 24843) (Fission yeast), this protein is DNA polymerase type-X family protein pol4 (pol4).